The primary structure comprises 312 residues: Taste receptor type 2 member 140 (312 aa).

The Extracellular portion of the chain corresponds to 1 to 9 (MKVTVECAL). A helical transmembrane segment spans residues 10-30 (LITLIVEIIIGCLGNGFIAVV). The Cytoplasmic portion of the chain corresponds to 31 to 46 (NIMDWTKRRRFSLVDQ). Residues 47–67 (ILTALAISRLAFVWSLLTVLV) form a helical membrane-spanning segment. The Extracellular portion of the chain corresponds to 68–87 (ISELHSSLLITRKMLRIINN). The chain crosses the membrane as a helical span at residues 88–108 (FWTVTNHFSIWLATCLSIFYF). Residues 109–133 (LKIANFSNSIFLSLRWRVKTVVSLT) are Cytoplasmic-facing. Residues 134–154 (LLVSLLLLLVNVIIINTCIVI) traverse the membrane as a helical segment. The Extracellular portion of the chain corresponds to 155–185 (SVEGYKVNMSYSSHFNNNPQISRIPLFTNTM). Asparagine 162 carries an N-linked (GlcNAc...) asparagine glycan. A helical transmembrane segment spans residues 186–206 (FTFIPFTVTLTIFLLLIFSLW). The Cytoplasmic portion of the chain corresponds to 207–229 (RHLKKMQHRAKGPRDPSTTAHIK). A helical membrane pass occupies residues 230–250 (ALQMVVTFLFLYTIFFLALVM). Residues 251-264 (QAWNNEIQSKTVFN) lie on the Extracellular side of the membrane. Residues 265-285 (LVFESIALAFPSGHSCVLILG) traverse the membrane as a helical segment. Residues 286–312 (NSKLRQAFLTIIWWLRSSFNAAELSSP) lie on the Cytoplasmic side of the membrane.

Belongs to the G-protein coupled receptor T2R family.

The protein resides in the membrane. In terms of biological role, putative taste receptor which may play a role in the perception of bitterness. The protein is Taste receptor type 2 member 140 of Rattus norvegicus (Rat).